The following is an 839-amino-acid chain: Phenylalanine--tRNA ligase beta subunit (839 aa).

One can recognise a tRNA-binding domain in the interval 42–166 (GELTGPIVIG…PPSVEGHQLV (125 aa)). Residues 421–496 (PEMPRQTINA…RKIGFDRIKA (76 aa)) enclose the B5 domain. Asp474, Asp480, Glu483, and Glu484 together coordinate Mg(2+). The FDX-ACB domain occupies 745–838 (SSFPVAKEDV…AEETCGAQLR (94 aa)).

The protein belongs to the phenylalanyl-tRNA synthetase beta subunit family. Type 1 subfamily. As to quaternary structure, tetramer of two alpha and two beta subunits. Mg(2+) serves as cofactor.

The protein resides in the cytoplasm. The catalysed reaction is tRNA(Phe) + L-phenylalanine + ATP = L-phenylalanyl-tRNA(Phe) + AMP + diphosphate + H(+). In Cutibacterium acnes (strain DSM 16379 / KPA171202) (Propionibacterium acnes), this protein is Phenylalanine--tRNA ligase beta subunit.